The primary structure comprises 373 residues: ORC1-type DNA replication protein 2 (373 aa).

ATP is bound by residues 63–67, tyrosine 205, and arginine 217; that span reads TGKTS.

Belongs to the CDC6/cdc18 family.

Involved in regulation of DNA replication. This Methanosarcina acetivorans (strain ATCC 35395 / DSM 2834 / JCM 12185 / C2A) protein is ORC1-type DNA replication protein 2 (cdc6-2).